We begin with the raw amino-acid sequence, 257 residues long: Putative aldolase class 2 protein CC_1201 (257 aa).

Zn(2+) contacts are provided by His114, His116, and His177.

It belongs to the aldolase class II family. The cofactor is Zn(2+).

The protein is Putative aldolase class 2 protein CC_1201 of Caulobacter vibrioides (strain ATCC 19089 / CIP 103742 / CB 15) (Caulobacter crescentus).